A 79-amino-acid chain; its full sequence is UPF0154 protein llmg_1186 (79 aa).

A helical transmembrane segment spans residues 4–24; it reads ILAILLMVVCLLAGFFLGTWF.

This sequence belongs to the UPF0154 family.

The protein localises to the cell membrane. This Lactococcus lactis subsp. cremoris (strain MG1363) protein is UPF0154 protein llmg_1186.